A 100-amino-acid chain; its full sequence is Urease subunit gamma (100 aa).

It belongs to the urease gamma subunit family. Heterotrimer of UreA (gamma), UreB (beta) and UreC (alpha) subunits. Three heterotrimers associate to form the active enzyme.

It localises to the cytoplasm. It catalyses the reaction urea + 2 H2O + H(+) = hydrogencarbonate + 2 NH4(+). It participates in nitrogen metabolism; urea degradation; CO(2) and NH(3) from urea (urease route): step 1/1. The polypeptide is Urease subunit gamma (Synechococcus sp. (strain WH7805)).